Here is a 321-residue protein sequence, read N- to C-terminus: MSGGKSAQGPEEGGVCITEALITKRNLTFPEDGELSEKMFHTLDELQTVRLDREGITTIRNLEGLQNLHSLYLQGNKIQQIENLACIPSLRFLSLAGNQIRQVENLLDLPCLQFLDLSENLIETLKLDEFPQSLLILNLSGNSCTNQDGYRELVTEALPLLLDLDGQPVVERWISDEEDEASSDEEFPELSGPFCSERGFLKELEQELSRHREHRQQTALTEHLLRMEMQPTLTDLPLLPGVPMAGDSSPSATPAQGEETVPEAVSSPQASSPTKKPCSLIPRGHQSSFWGRKGARAATAPKASVAEAPSTTKTTAKRSKK.

LRR repeat units follow at residues 45–66 (ELQT…EGLQ), 67–88 (NLHS…ACIP), 89–110 (SLRF…LDLP), and 111–132 (CLQF…EFPQ). The region spanning 142 to 184 (NSCTNQDGYRELVTEALPLLLDLDGQPVVERWISDEEDEASSD) is the LRRCT domain. Phosphoserine is present on residues Ser175 and Ser182. Residues 201 to 221 (LKELEQELSRHREHRQQTALT) are a coiled coil. The interval 235–321 (DLPLLPGVPM…TKTTAKRSKK (87 aa)) is disordered.

The protein resides in the cell projection. It localises to the cilium. Its subcellular location is the flagellum. In terms of biological role, required for normal spermatogenesis and male fertility. Plays an important role in sperm flagellum biogenesis. The sequence is that of Leucine-rich repeat-containing protein 46 (LRRC46) from Homo sapiens (Human).